The sequence spans 460 residues: Benzyl alcohol O-benzoyltransferase (460 aa).

Catalysis depends on proton acceptor residues histidine 167 and aspartate 382.

This sequence belongs to the plant acyltransferase family. Specifically expressed in flowers, mainly in the limb of flowers corollas, and, at low levels, in roots, stems, sepals and leaves.

It carries out the reaction benzyl alcohol + benzoyl-CoA = benzyl benzoate + CoA. It catalyses the reaction benzyl alcohol + acetyl-CoA = benzyl acetate + CoA. The catalysed reaction is 3-hydroxybenzyl alcohol + acetyl-CoA = 3-hydroxy-benzyl acetate + CoA. The enzyme catalyses 3-hydroxybenzyl alcohol + benzoyl-CoA = 3-hydroxy-benzyl benzoate + CoA. It carries out the reaction 2-phenylethanol + benzoyl-CoA = phenethyl benzoate + CoA. It catalyses the reaction (3Z)-hex-3-en-1-ol + benzoyl-CoA = (3Z)-hex-3-en-1-yl benzoate + CoA. The catalysed reaction is (2E)-geraniol + acetyl-CoA = (2E)-geranyl acetate + CoA. The enzyme catalyses butan-1-ol + benzoyl-CoA = butyl benzoate + CoA. It carries out the reaction (2E)-geraniol + benzoyl-CoA = (2E)-geranyl benzoate + CoA. It catalyses the reaction octan-1-ol + benzoyl-CoA = octyl benzoate + CoA. It functions in the pathway aromatic compound metabolism; benzoyl-CoA degradation. Functionally, involved in the production of volatile organic compounds (VOCs), including floral volatile benzenoids and phenylpropanoids (FVBP), in flowers of fragrant cultivars (e.g. cv. Mitchell and cv. V26), scent attracting pollinators (e.g. the night-active hawkmoth pollinator Manduca sexta). Acyltransferase that catalyzes the transfer of benzoyl and acetyl moieties to a large variety of potential substrate alcohols, and involved in the formation of volatile esters benzyl benzoate and phenylethyl benzoate from benzoyl-CoA. With acetyl-CoA, mainly active on benzyl alcohol, and, to a lower extent, on 3-hydroxybenzyl alcohol, geraniol, and 2-phenylethanol, but barely active on butanol, 1-octanol, 4-hydroxy-benzyl alcohol, 2-hexanol, cis-3-hexen-1-ol and linalool. With benzoyl-CoA, mainly active on benzyl alcohol, but also efficient on several substrates, including 3-hydroxybenzyl alcohol, 2-phenylethanol, geraniol, butanol, cis-3-hexen-1-ol and 1-octanol. This Petunia hybrida (Petunia) protein is Benzyl alcohol O-benzoyltransferase.